The sequence spans 108 residues: MLCLRYFIPMLLVANAAPYFFYPIFMLSMIARKYPCPYCMIILGLLINTRTLWSDSTFFSFNRNIFDTKAFPTELKEAGYRLVRLSWIRWLAGKESIHIPWLDATIKL.

Residues 7–27 traverse the membrane as a helical segment; sequence FIPMLLVANAAPYFFYPIFML.

It to N.crassa NCU05373.1.

It localises to the membrane. This is an uncharacterized protein from Schizosaccharomyces pombe (strain 972 / ATCC 24843) (Fission yeast).